Consider the following 748-residue polypeptide: Long-chain-alcohol oxidase FAO4B (748 aa).

Residues 1 to 18 (MEDVRRRNRGHPLLRSKK) show a composition bias toward basic residues. Positions 1-25 (MEDVRRRNRGHPLLRSKKRGEGYNH) are disordered. 2 consecutive transmembrane segments (helical) span residues 89 to 109 (IILMILSFRFGTLLLCGSLCL) and 140 to 160 (FLLPFRITFFLAKFYTLFYFF). 238–253 (CDAVVVGSGSGGGVAA) lines the FAD pocket. The Proton acceptor role is filled by His-679.

This sequence belongs to the GMC oxidoreductase family.

The protein localises to the membrane. The enzyme catalyses a long-chain primary fatty alcohol + O2 = a long-chain fatty aldehyde + H2O2. In terms of biological role, long-chain fatty alcohol oxidase involved in the omega-oxidation pathway of lipid degradation. The chain is Long-chain-alcohol oxidase FAO4B (FAO4B) from Arabidopsis thaliana (Mouse-ear cress).